Here is a 379-residue protein sequence, read N- to C-terminus: UPF0450 protein C17orf58 homolog (379 aa).

An N-terminal signal peptide occupies residues 1 to 17; that stretch reads MIPALTVPLLFLCATSA. Disordered regions lie at residues 76 to 95 and 162 to 194; these read RTRATHPQRQGQDLALPDKT and TASQNLQGRKYSRNNDYGSMDHESNRPGKMNPH. Over residues 180–194 the composition is skewed to basic and acidic residues; sequence SMDHESNRPGKMNPH. 3 disulfide bridges follow: cysteine 234-cysteine 308, cysteine 238-cysteine 312, and cysteine 249-cysteine 378. One can recognise an NTR domain in the interval 234–378; the sequence is CIAECHRDKD…KVLAAAHSKC (145 aa).

This sequence belongs to the UPF0450 family.

The polypeptide is UPF0450 protein C17orf58 homolog (Xenopus laevis (African clawed frog)).